The following is a 349-amino-acid chain: Probable dual-specificity RNA methyltransferase RlmN (349 aa).

Catalysis depends on glutamate 93, which acts as the Proton acceptor. One can recognise a Radical SAM core domain in the interval 99–329; it reads YKHGNTICVS…TTIRREMGSD (231 aa). Cysteines 106 and 334 form a disulfide. [4Fe-4S] cluster contacts are provided by cysteine 113, cysteine 117, and cysteine 120. S-adenosyl-L-methionine contacts are provided by residues 160–161, serine 192, 215–217, and asparagine 291; these read GE and SLH. Cysteine 334 acts as the S-methylcysteine intermediate in catalysis.

The protein belongs to the radical SAM superfamily. RlmN family. It depends on [4Fe-4S] cluster as a cofactor.

The protein localises to the cytoplasm. It carries out the reaction adenosine(2503) in 23S rRNA + 2 reduced [2Fe-2S]-[ferredoxin] + 2 S-adenosyl-L-methionine = 2-methyladenosine(2503) in 23S rRNA + 5'-deoxyadenosine + L-methionine + 2 oxidized [2Fe-2S]-[ferredoxin] + S-adenosyl-L-homocysteine. The enzyme catalyses adenosine(37) in tRNA + 2 reduced [2Fe-2S]-[ferredoxin] + 2 S-adenosyl-L-methionine = 2-methyladenosine(37) in tRNA + 5'-deoxyadenosine + L-methionine + 2 oxidized [2Fe-2S]-[ferredoxin] + S-adenosyl-L-homocysteine. Its function is as follows. Specifically methylates position 2 of adenine 2503 in 23S rRNA and position 2 of adenine 37 in tRNAs. The polypeptide is Probable dual-specificity RNA methyltransferase RlmN (Clostridium tetani (strain Massachusetts / E88)).